We begin with the raw amino-acid sequence, 215 residues long: MSEAKRLAAEKAIDYVEDGMIVGVGTGSTVAYFIDALGRIGHRIKGAVSSSEQSTARLRQHGIEVLDLNHTGTLSLYVDGADECDPNRCLIKGGGAALTREKIIAEASERFICIVDPSKQVPVLGNFPLPVEVIPMARSLVARQILALTGGQPVWRDGVVTDNGNVVLDVHNLHITDPVALERNLNQIPGVVCVGLFARRPADVVIVGGETPRVL.

Residues 26–29 (TGST), 79–82 (DGAD), and 92–95 (KGGG) contribute to the substrate site. The Proton acceptor role is filled by glutamate 101. Substrate is bound at residue lysine 119.

This sequence belongs to the ribose 5-phosphate isomerase family. Homodimer.

The catalysed reaction is aldehydo-D-ribose 5-phosphate = D-ribulose 5-phosphate. The protein operates within carbohydrate degradation; pentose phosphate pathway; D-ribose 5-phosphate from D-ribulose 5-phosphate (non-oxidative stage): step 1/1. Functionally, catalyzes the reversible conversion of ribose-5-phosphate to ribulose 5-phosphate. This is Ribose-5-phosphate isomerase A from Xanthomonas campestris pv. campestris (strain 8004).